The following is a 256-amino-acid chain: (E)-benzylidenesuccinyl-CoA hydratase (256 aa).

Residue Glu110 is the Nucleophile of the active site. Glu130 (proton acceptor) is an active-site residue.

The protein belongs to the enoyl-CoA hydratase/isomerase family. Homotrimer.

The catalysed reaction is (2S)-[(R)-hydroxy(phenyl)methyl]succinyl-CoA = (E)-2-benzylidenesuccinyl-CoA + H2O. It functions in the pathway xenobiotic degradation; toluene degradation. Its function is as follows. Involved in an anaerobic toluene degradation pathway. Catalyzes the hydration of (E)-2-benzylidenesuccinyl-CoA to the corresponding alcohol intermediate, 2-(alpha-hydroxybenzyl)succinyl-CoA. Also accepts the N-acetylcysteamine (NAC) thioester of (E)-benzylidenesuccinate. This chain is (E)-benzylidenesuccinyl-CoA hydratase, found in Thauera aromatica.